Reading from the N-terminus, the 280-residue chain is Shikimate dehydrogenase (NADP(+)) (280 aa).

Shikimate is bound by residues 23 to 25 (SLS) and Thr-70. Lys-74 functions as the Proton acceptor in the catalytic mechanism. 2 residues coordinate shikimate: Asn-95 and Asp-111. NADP(+)-binding positions include 135–139 (GSGGA), 158–163 (NRTISK), and Ile-221. Tyr-223 lines the shikimate pocket. Residue Gly-247 coordinates NADP(+).

Belongs to the shikimate dehydrogenase family. In terms of assembly, homodimer.

The catalysed reaction is shikimate + NADP(+) = 3-dehydroshikimate + NADPH + H(+). It participates in metabolic intermediate biosynthesis; chorismate biosynthesis; chorismate from D-erythrose 4-phosphate and phosphoenolpyruvate: step 4/7. In terms of biological role, involved in the biosynthesis of the chorismate, which leads to the biosynthesis of aromatic amino acids. Catalyzes the reversible NADPH linked reduction of 3-dehydroshikimate (DHSA) to yield shikimate (SA). In Buchnera aphidicola subsp. Cinara cedri (strain Cc), this protein is Shikimate dehydrogenase (NADP(+)).